The sequence spans 408 residues: Acetate kinase (408 aa).

Residue Asn-10 coordinates Mg(2+). An ATP-binding site is contributed by Lys-17. Arg-96 provides a ligand contact to substrate. Residue Asp-153 is the Proton donor/acceptor of the active site. ATP contacts are provided by residues 213–217 (HLGNG) and 288–290 (DLR). Glu-393 contributes to the Mg(2+) binding site.

Belongs to the acetokinase family. Homodimer. Mg(2+) serves as cofactor. The cofactor is Mn(2+).

It localises to the cytoplasm. The enzyme catalyses acetate + ATP = acetyl phosphate + ADP. Its pathway is metabolic intermediate biosynthesis; acetyl-CoA biosynthesis; acetyl-CoA from acetate: step 1/2. Catalyzes the formation of acetyl phosphate from acetate and ATP. Can also catalyze the reverse reaction. This is Acetate kinase from Borrelia duttonii (strain Ly).